The chain runs to 457 residues: UDP-glycosyltransferase 708C1 (457 aa).

A UDP-alpha-D-glucose-binding site is contributed by glycine 31. Histidine 32 acts as the Proton acceptor in catalysis. Histidine 32 contributes to the an anthocyanidin binding site. Threonine 34 contacts UDP-alpha-D-glucose. Residue asparagine 94 participates in an anthocyanidin binding. The active-site Charge relay is the aspartate 129. Threonine 150 serves as a coordination point for UDP-alpha-D-glucose. The UDP stretch occupies residues 279 to 280 (NR). UDP-alpha-D-glucose contacts are provided by valine 341, glutamine 343, histidine 358, tryptophan 361, asparagine 362, serine 363, and glutamate 366. An an anthocyanidin-binding site is contributed by glycine 381. 2 residues coordinate UDP-alpha-D-glucose: aspartate 382 and glutamine 383.

This sequence belongs to the UDP-glycosyltransferase family. As to expression, expressed in cotyledons. Not detected in flowers, leaves, roots and hypocotyls.

It carries out the reaction a 3'-hydro-2'-hydroxy-beta-oxodihydrochalcone + UDP-alpha-D-glucose = a 3'-(beta-D-glucopyranosyl)-2'-hydroxy-beta-oxodihydrochalcone + UDP + H(+). In terms of biological role, UDP-glucose-dependent glucosyltransferase catalyzing the C-glucosylation of 2-hydroxyflavanones (2-hydroxynaringenin, 2-hydroxyeriodictyol and 2-hydroxypinocembrin) and phloretin. No activity with flavanones, flavones or flavonols. Exhibits C-glycosylation activity toward 2',4',6'-trihydroxyacetophenone and phloretin using UDP-glucose as sugar donor. Can use UDP-galactose as sugar donor, but catalytic efficiency is 14-fold lower toward UDP-galactose than toward UDP-glucose. The chain is UDP-glycosyltransferase 708C1 from Fagopyrum esculentum (Common buckwheat).